Consider the following 398-residue polypeptide: Elongation factor Tu (398 aa).

One can recognise a tr-type G domain in the interval 10-207 (KPHVNIGTIG…TVDEYIPEPE (198 aa)). The tract at residues 19–26 (GHVDHGKT) is G1. 19–26 (GHVDHGKT) lines the GTP pocket. Threonine 26 is a Mg(2+) binding site. The tract at residues 63-67 (GITIN) is G2. The tract at residues 84 to 87 (DAPG) is G3. Residues 84-88 (DAPGH) and 139-142 (NKVD) each bind GTP. Residues 139-142 (NKVD) are G4. Residues 177-179 (SAL) form a G5 region.

This sequence belongs to the TRAFAC class translation factor GTPase superfamily. Classic translation factor GTPase family. EF-Tu/EF-1A subfamily. As to quaternary structure, monomer.

It localises to the cytoplasm. It carries out the reaction GTP + H2O = GDP + phosphate + H(+). GTP hydrolase that promotes the GTP-dependent binding of aminoacyl-tRNA to the A-site of ribosomes during protein biosynthesis. This is Elongation factor Tu from Streptococcus agalactiae serotype Ia (strain ATCC 27591 / A909 / CDC SS700).